Here is a 247-residue protein sequence, read N- to C-terminus: Probable transcriptional regulatory protein DVU_2259 (247 aa).

The tract at residues 1–22 is disordered; sequence MAGHSKWANIQHRKGRQDAKRG.

It belongs to the TACO1 family.

Its subcellular location is the cytoplasm. The chain is Probable transcriptional regulatory protein DVU_2259 from Nitratidesulfovibrio vulgaris (strain ATCC 29579 / DSM 644 / CCUG 34227 / NCIMB 8303 / VKM B-1760 / Hildenborough) (Desulfovibrio vulgaris).